Reading from the N-terminus, the 388-residue chain is MEGRKEMLMYLEGGQLGTLVGKRMAHLSDAVGSPMAESQDKLVPKSPRAGPIAPTDRAEESEVEVGQATGQQRSRSPQLRISSPHPPAHSDSLSTKGQHSSSDTESDFYEEIEVSCTPDCNSAASDYQQHSAGQCSEPMGGSPVNGSDSSKGGGGSHGSFSACAGDQMRRYRTAFTREQIARLEKEFYRENYVSRPRRCELAAALNLPETTIKVWFQNRRMKDKRQRLAMTWPHPADPAFYTYMMSHAAATGNLPYPFPSHLPLPYYSHMGISAGSTAAATPFSAPLRPLDTFRVLSHPYPRPDLLCAFRHPSIYASPAHGLGSGGSPCSCLACLSTSTNGLGQRAAASDFTCSSTSRSDSFLTFTPSILSKSSSVSLDQREEVPLTR.

2 disordered regions span residues Ala-30–Tyr-109 and Ser-131–Cys-163. 2 stretches are compositionally biased toward polar residues: residues Ala-68 to Ile-81 and Asp-91 to Asp-103. Positions Met-168 to Arg-227 form a DNA-binding region, homeobox.

The protein belongs to the even-skipped homeobox family.

It is found in the nucleus. In terms of biological role, may be required for posterior development and development of normal embryonic axial pattern. This Xenopus laevis (African clawed frog) protein is Homeobox protein XHOX-3 (xhox3).